The sequence spans 474 residues: Aspartyl/glutamyl-tRNA(Asn/Gln) amidotransferase subunit B (474 aa).

It belongs to the GatB/GatE family. GatB subfamily. Heterotrimer of A, B and C subunits.

The enzyme catalyses L-glutamyl-tRNA(Gln) + L-glutamine + ATP + H2O = L-glutaminyl-tRNA(Gln) + L-glutamate + ADP + phosphate + H(+). It catalyses the reaction L-aspartyl-tRNA(Asn) + L-glutamine + ATP + H2O = L-asparaginyl-tRNA(Asn) + L-glutamate + ADP + phosphate + 2 H(+). Functionally, allows the formation of correctly charged Asn-tRNA(Asn) or Gln-tRNA(Gln) through the transamidation of misacylated Asp-tRNA(Asn) or Glu-tRNA(Gln) in organisms which lack either or both of asparaginyl-tRNA or glutaminyl-tRNA synthetases. The reaction takes place in the presence of glutamine and ATP through an activated phospho-Asp-tRNA(Asn) or phospho-Glu-tRNA(Gln). This chain is Aspartyl/glutamyl-tRNA(Asn/Gln) amidotransferase subunit B, found in Lactiplantibacillus plantarum (strain ATCC BAA-793 / NCIMB 8826 / WCFS1) (Lactobacillus plantarum).